A 180-amino-acid polypeptide reads, in one-letter code: Hypoxanthine-guanine phosphoribosyltransferase (180 aa).

GMP-binding positions include K40, 99–107 (EDIVDSGLT), K131, and D159. D103 (proton acceptor) is an active-site residue. Residue D159 coordinates Mg(2+).

It belongs to the purine/pyrimidine phosphoribosyltransferase family. Mg(2+) is required as a cofactor.

It localises to the cytoplasm. It catalyses the reaction IMP + diphosphate = hypoxanthine + 5-phospho-alpha-D-ribose 1-diphosphate. The enzyme catalyses GMP + diphosphate = guanine + 5-phospho-alpha-D-ribose 1-diphosphate. It participates in purine metabolism; IMP biosynthesis via salvage pathway; IMP from hypoxanthine: step 1/1. Functionally, converts guanine to guanosine monophosphate, and hypoxanthine to inosine monophosphate. Transfers the 5-phosphoribosyl group from 5-phosphoribosylpyrophosphate onto the purine. Plays a central role in the generation of purine nucleotides through the purine salvage pathway. The polypeptide is Hypoxanthine-guanine phosphoribosyltransferase (hprT) (Dictyostelium discoideum (Social amoeba)).